A 493-amino-acid chain; its full sequence is Glutamate--tRNA ligase (493 aa).

The 'HIGH' region signature appears at 10 to 20 (PSPTGDPHVGT). Positions 251 to 255 (KLSKR) match the 'KMSKS' region motif. K254 is a binding site for ATP.

It belongs to the class-I aminoacyl-tRNA synthetase family. Glutamate--tRNA ligase type 1 subfamily. Monomer.

It is found in the cytoplasm. It catalyses the reaction tRNA(Glu) + L-glutamate + ATP = L-glutamyl-tRNA(Glu) + AMP + diphosphate. Catalyzes the attachment of glutamate to tRNA(Glu) in a two-step reaction: glutamate is first activated by ATP to form Glu-AMP and then transferred to the acceptor end of tRNA(Glu). The protein is Glutamate--tRNA ligase of Pseudomonas putida (strain ATCC 47054 / DSM 6125 / CFBP 8728 / NCIMB 11950 / KT2440).